Here is a 248-residue protein sequence, read N- to C-terminus: Malonyl-[acyl-carrier protein] O-methyltransferase 2 (248 aa).

It belongs to the methyltransferase superfamily.

The catalysed reaction is malonyl-[ACP] + S-adenosyl-L-methionine = malonyl-[ACP] methyl ester + S-adenosyl-L-homocysteine. Its pathway is cofactor biosynthesis; biotin biosynthesis. In terms of biological role, converts the free carboxyl group of a malonyl-thioester to its methyl ester by transfer of a methyl group from S-adenosyl-L-methionine (SAM). It allows to synthesize pimeloyl-ACP via the fatty acid synthetic pathway. In Coxiella burnetii (strain RSA 493 / Nine Mile phase I), this protein is Malonyl-[acyl-carrier protein] O-methyltransferase 2.